The sequence spans 361 residues: uncharacterized protein (361 aa).

2 disordered regions span residues 53 to 75 and 150 to 211; these read KNIS…NINN and NYNN…YHHY. Low complexity predominate over residues 150–198; it reads NYNNYNNNNNNNNNNNNNNNNNNNNNNNNNNNNNNKNNNKNNNNKPNNF. Positions 199 to 211 are enriched in basic residues; that stretch reads IHHHHHHHHYHHY. The chain crosses the membrane as a helical span at residues 225–245; it reads IFIGLMAFLILFILMVIGLLI.

The protein localises to the membrane. This is an uncharacterized protein from Dictyostelium discoideum (Social amoeba).